A 233-amino-acid polypeptide reads, in one-letter code: Octanoyltransferase (233 aa).

One can recognise a BPL/LPL catalytic domain in the interval 33–216 (GRAQDTVILL…HLVRALSSNG (184 aa)). Residues 71 to 78 (RGGRITWH), 146 to 148 (AIG), and 159 to 161 (GFA) contribute to the substrate site. Catalysis depends on C177, which acts as the Acyl-thioester intermediate.

The protein belongs to the LipB family.

It localises to the cytoplasm. It catalyses the reaction octanoyl-[ACP] + L-lysyl-[protein] = N(6)-octanoyl-L-lysyl-[protein] + holo-[ACP] + H(+). Its pathway is protein modification; protein lipoylation via endogenous pathway; protein N(6)-(lipoyl)lysine from octanoyl-[acyl-carrier-protein]: step 1/2. In terms of biological role, catalyzes the transfer of endogenously produced octanoic acid from octanoyl-acyl-carrier-protein onto the lipoyl domains of lipoate-dependent enzymes. Lipoyl-ACP can also act as a substrate although octanoyl-ACP is likely to be the physiological substrate. This chain is Octanoyltransferase, found in Clavibacter michiganensis subsp. michiganensis (strain NCPPB 382).